The following is a 240-amino-acid chain: TATA-box-binding protein (240 aa).

Residues 21 to 61 (NTRQVWENQNRDGTKPATTFQSEEDIKRAAPESEKDTSATS) form a disordered region. A compositionally biased stretch (basic and acidic residues) spans 44–57 (EDIKRAAPESEKDT). 2 tandem repeats follow at residues 67–143 (LQNI…ARII) and 157–234 (IQNI…YPVL).

It belongs to the TBP family. In terms of assembly, binds DNA as monomer. The 1.2 MDa TFIID complex is composed of TATA binding protein (TBP) and the 14 TBP-associated factors. One copy of each TAF1, TAF2, TAF3, TAF7, TAF8, TAF11, TAF13, two copies of each TAF4, TAF5, TAF6, TAF9, TAF10, TAF12, and three copies of TAF14. Interacts with TFC8.

The protein resides in the nucleus. General transcription factor that functions at the core of the DNA-binding general transcription factor complex TFIID. Binding of TFIID to a promoter (with or without TATA element) is the initial step in preinitiation complex (PIC) formation. TFIID plays a key role in the regulation of gene expression by RNA polymerase II through different activities such as transcription activator interaction, core promoter recognition and selectivity, TFIIA and TFIIB interaction, chromatin modification (histone acetylation by TAF1), facilitation of DNA opening and initiation of transcription. The chain is TATA-box-binding protein (SPT15) from Saccharomyces cerevisiae (strain ATCC 204508 / S288c) (Baker's yeast).